The chain runs to 252 residues: Hydroxyacylglutathione hydrolase (252 aa).

H54, H56, D58, H59, H111, D128, and H166 together coordinate Zn(2+).

The protein belongs to the metallo-beta-lactamase superfamily. Glyoxalase II family. In terms of assembly, monomer. Requires Zn(2+) as cofactor.

It catalyses the reaction an S-(2-hydroxyacyl)glutathione + H2O = a 2-hydroxy carboxylate + glutathione + H(+). It participates in secondary metabolite metabolism; methylglyoxal degradation; (R)-lactate from methylglyoxal: step 2/2. Its function is as follows. Thiolesterase that catalyzes the hydrolysis of S-D-lactoyl-glutathione to form glutathione and D-lactic acid. The chain is Hydroxyacylglutathione hydrolase from Aliivibrio salmonicida (strain LFI1238) (Vibrio salmonicida (strain LFI1238)).